The following is a 179-amino-acid chain: Large ribosomal subunit protein uL5 (179 aa).

Belongs to the universal ribosomal protein uL5 family. Part of the 50S ribosomal subunit; part of the 5S rRNA/L5/L18/L25 subcomplex. Contacts the 5S rRNA and the P site tRNA. Forms a bridge to the 30S subunit in the 70S ribosome.

Functionally, this is one of the proteins that bind and probably mediate the attachment of the 5S RNA into the large ribosomal subunit, where it forms part of the central protuberance. In the 70S ribosome it contacts protein S13 of the 30S subunit (bridge B1b), connecting the 2 subunits; this bridge is implicated in subunit movement. Contacts the P site tRNA; the 5S rRNA and some of its associated proteins might help stabilize positioning of ribosome-bound tRNAs. In Desulforapulum autotrophicum (strain ATCC 43914 / DSM 3382 / VKM B-1955 / HRM2) (Desulfobacterium autotrophicum), this protein is Large ribosomal subunit protein uL5.